Reading from the N-terminus, the 178-residue chain is CDP-archaeol synthase (178 aa).

The next 5 helical transmembrane spans lie at 7–27 (LFVSFWFILPAYTANAMACIF), 56–76 (FFGVFFGIVTAIIQYLVSNLG), 91–111 (VIIGFLLSFGALFGDMFGSFL), 125–145 (VLDQITFIVFALIFVSYYYLV), and 149–169 (ISITLLILSPVVHILSNIIAY).

It belongs to the CDP-archaeol synthase family. It depends on Mg(2+) as a cofactor.

It localises to the cell membrane. The enzyme catalyses 2,3-bis-O-(geranylgeranyl)-sn-glycerol 1-phosphate + CTP + H(+) = CDP-2,3-bis-O-(geranylgeranyl)-sn-glycerol + diphosphate. It functions in the pathway membrane lipid metabolism; glycerophospholipid metabolism. In terms of biological role, catalyzes the formation of CDP-2,3-bis-(O-geranylgeranyl)-sn-glycerol (CDP-archaeol) from 2,3-bis-(O-geranylgeranyl)-sn-glycerol 1-phosphate (DGGGP) and CTP. This reaction is the third ether-bond-formation step in the biosynthesis of archaeal membrane lipids. This Methanococcus vannielii (strain ATCC 35089 / DSM 1224 / JCM 13029 / OCM 148 / SB) protein is CDP-archaeol synthase.